The chain runs to 86 residues: Progonadoliberin-2 (86 aa).

An N-terminal signal peptide occupies residues M1 to S24. Residue Q25 is modified to Pyrrolidone carboxylic acid. The residue at position 34 (G34) is a Glycine amide.

The protein belongs to the GnRH family.

Its subcellular location is the secreted. Its function is as follows. Stimulates the secretion of gonadotropins. This Rutilus rutilus (Roach) protein is Progonadoliberin-2 (gnrh2).